A 658-amino-acid chain; its full sequence is Protein translocase subunit SecA 3 (658 aa).

ATP-binding positions include glutamine 111, 129-133, and aspartate 536; that span reads GEGKT.

Belongs to the SecA family. In terms of assembly, monomer and homodimer. Part of the essential Sec protein translocation apparatus which comprises SecA, SecYEG and auxiliary proteins SecDF-YajC and YidC.

It is found in the cell inner membrane. Its subcellular location is the cytoplasm. It carries out the reaction ATP + H2O + cellular proteinSide 1 = ADP + phosphate + cellular proteinSide 2.. Its function is as follows. Part of the Sec protein translocase complex. Interacts with the SecYEG preprotein conducting channel. Has a central role in coupling the hydrolysis of ATP to the transfer of proteins into and across the cell membrane, serving both as a receptor for the preprotein-SecB complex and as an ATP-driven molecular motor driving the stepwise translocation of polypeptide chains across the membrane. This chain is Protein translocase subunit SecA 3, found in Magnetococcus marinus (strain ATCC BAA-1437 / JCM 17883 / MC-1).